Here is a 929-residue protein sequence, read N- to C-terminus: MSTPIDSSRAASIVASILPYSRYLKRTLASEPGLQQELLDQLPNPFLWEEMLDFLQHPAISLEDEADLHRLLRQLRKRVILRLAARDLAGLADLNEVMTTMTALADTTIRFALEFLHTAMTHPGHFGKPTGEKTGTEQQLLIVAMGKLGGGELNVSSDVDLIFIYPEDGETDGRKSITNHEFFVRLGRKLIASLSDYTVDGYVFRVDMRLRPHGENSPLAISLPMLEDYFITQGREWERHAWIKSRVITGSSVAEATLMELIVRPFVFRKYLDFEAYEAMRSLHAQLRKEVDRRELHDNIKLGPGGIREIEFITQVFQLIRGGRDADLCIRPTLGVLRRLRQKQPLPGQTIEELTEAYCFLRKLEHRLQYLDDQQTQNLPQHPDEQTLIARSMGFTGYGDFLDHLDLHRQNVTRHFEQIFAARRKSPRHDTFARIRPEQSGDHETVEAFSKQLQTLGYLDPGKITARVRQFYDSTFFRQLTHSSQERIFELMPTLMEVIARFPPVDITLERILRLLEKIGQYPAYLALLQEHPQTLPRVAKLASVSQWASDYLGRHPILLDELLTSSGLHILPDWPALKTELTHQLHHVNIPKVQMVEWQMDVLRHFQHAQVFRLLVTDLEGDLLLEKLSDHLTELADLILDNVLQLAWQGLKKKHRELPAFAIIGYGKLGGKELGYASDLDIVFLYRDDHPDAASIYTKLAQNINLWLTSHTSAGILYETDLRLRPNGTSGLLVNSIEAFTQYQYEQAWVWEHQALTRARFVVGDREAGEMFEQMRKNMLCQPRDLVKLKREILMMRSKMLEAHPNPTPLFDIKHDRGGIIDVEFIVQYLVLGYAHRYPQLTGNIGNIALLKLAGELGLTSAGKATAALTAYRELRRTQHQLRLSGTPEPAGTALSRDVSQKFARVANNHLSDARQAVFQLWEDIFGT.

Residues 1-423 (MSTPIDSSRA…RHFEQIFAAR (423 aa)) form an adenylyl removase region. Residues 433–929 (ARIRPEQSGD…FQLWEDIFGT (497 aa)) form an adenylyl transferase region.

Belongs to the GlnE family. Mg(2+) is required as a cofactor.

It carries out the reaction [glutamine synthetase]-O(4)-(5'-adenylyl)-L-tyrosine + phosphate = [glutamine synthetase]-L-tyrosine + ADP. The catalysed reaction is [glutamine synthetase]-L-tyrosine + ATP = [glutamine synthetase]-O(4)-(5'-adenylyl)-L-tyrosine + diphosphate. Its function is as follows. Involved in the regulation of glutamine synthetase GlnA, a key enzyme in the process to assimilate ammonia. When cellular nitrogen levels are high, the C-terminal adenylyl transferase (AT) inactivates GlnA by covalent transfer of an adenylyl group from ATP to specific tyrosine residue of GlnA, thus reducing its activity. Conversely, when nitrogen levels are low, the N-terminal adenylyl removase (AR) activates GlnA by removing the adenylyl group by phosphorolysis, increasing its activity. The regulatory region of GlnE binds the signal transduction protein PII (GlnB) which indicates the nitrogen status of the cell. The polypeptide is Bifunctional glutamine synthetase adenylyltransferase/adenylyl-removing enzyme (Nitrosomonas europaea (strain ATCC 19718 / CIP 103999 / KCTC 2705 / NBRC 14298)).